Consider the following 288-residue polypeptide: 4-diphosphocytidyl-2-C-methyl-D-erythritol kinase (288 aa).

Lysine 8 is an active-site residue. 90 to 100 (PVGAGLAGGSS) contacts ATP. Residue aspartate 132 is part of the active site.

This sequence belongs to the GHMP kinase family. IspE subfamily.

The catalysed reaction is 4-CDP-2-C-methyl-D-erythritol + ATP = 4-CDP-2-C-methyl-D-erythritol 2-phosphate + ADP + H(+). Its pathway is isoprenoid biosynthesis; isopentenyl diphosphate biosynthesis via DXP pathway; isopentenyl diphosphate from 1-deoxy-D-xylulose 5-phosphate: step 3/6. Its function is as follows. Catalyzes the phosphorylation of the position 2 hydroxy group of 4-diphosphocytidyl-2C-methyl-D-erythritol. The protein is 4-diphosphocytidyl-2-C-methyl-D-erythritol kinase of Chlamydia trachomatis serovar D (strain ATCC VR-885 / DSM 19411 / UW-3/Cx).